Consider the following 549-residue polypeptide: MKNINPTQTAAWQALQKHFDEMKDVTIADLFAKDGDRFSKFSATFNDQMLVDYSKNRITEETLAKLQDLAKECDLAGAIKSMFSGEKINRTENRAVLHVALRNRSNTPILVDGKDVMPEVNAVLEKMKTFSEAIISGEWKGYTGKAITDVVNIGIGGSDLGPYMVTEALRPYKNHLNMHFVSNVDGTHISEVLKKVNPETTLFLVASKTFTTQETMTNAHSARDWFLKAAGDEKHVAKHFAALSTNAKAVGEFGIDTANMFEFWDWVGGRYSLWSAIGLSIVLSIGFDNFVELLSGAHAMDKHFSTTPAEKNLPVLLALIGIWYNNFFGAETEAILPYDQYMHRFAAYFQQGNMESNGKYVDRNGNVVDYQTGPIIWGEPGTNGQHAFYQLIHQGTKMVPCDFIAPAITHNPLSDHHQKLLSNFFAQTEALAFGKSREVVEQEYRDQGKDPATLDYVVPFKVFEGNRPTNSILLREITPFSLGALIALYEHKIFTQGVILNIFTFDQWGVELGKQLANRILPELKDDKEISSHDSSTNGLINRYKAWRG.

3 positions are modified to N6-acetyllysine: lysine 80, lysine 228, and lysine 234. The active-site Proton donor is the glutamate 355. Active-site residues include histidine 386 and lysine 514.

The protein belongs to the GPI family.

It is found in the cytoplasm. The enzyme catalyses alpha-D-glucose 6-phosphate = beta-D-fructose 6-phosphate. The protein operates within carbohydrate biosynthesis; gluconeogenesis. It functions in the pathway carbohydrate degradation; glycolysis; D-glyceraldehyde 3-phosphate and glycerone phosphate from D-glucose: step 2/4. Its function is as follows. Catalyzes the reversible isomerization of glucose-6-phosphate to fructose-6-phosphate. This Shigella flexneri serotype 5b (strain 8401) protein is Glucose-6-phosphate isomerase.